We begin with the raw amino-acid sequence, 409 residues long: Failed axon connections homolog (409 aa).

A helical transmembrane segment spans residues 68 to 88 (YLTGGALLAAAAYLLHELLVI). The segment at 372–409 (DEGAENSFSRTPDTDFTGHSLFDSDVDMDDYTDHEQCK) is disordered.

It belongs to the FAX family.

It is found in the membrane. In terms of biological role, may play a role in axonal development. The sequence is that of Failed axon connections homolog (FAXC) from Homo sapiens (Human).